Consider the following 252-residue polypeptide: 5-oxoprolinase subunit A (252 aa).

This sequence belongs to the LamB/PxpA family. As to quaternary structure, forms a complex composed of PxpA, PxpB and PxpC.

It carries out the reaction 5-oxo-L-proline + ATP + 2 H2O = L-glutamate + ADP + phosphate + H(+). Catalyzes the cleavage of 5-oxoproline to form L-glutamate coupled to the hydrolysis of ATP to ADP and inorganic phosphate. The protein is 5-oxoprolinase subunit A of Mycolicibacterium paratuberculosis (strain ATCC BAA-968 / K-10) (Mycobacterium paratuberculosis).